The following is a 311-amino-acid chain: tRNA dimethylallyltransferase (311 aa).

Gly13 to Thr20 lines the ATP pocket. Thr15–Thr20 provides a ligand contact to substrate. Interaction with substrate tRNA stretches follow at residues Asp38–Gln41 and Gln166–Arg170.

It belongs to the IPP transferase family. In terms of assembly, monomer. The cofactor is Mg(2+).

It catalyses the reaction adenosine(37) in tRNA + dimethylallyl diphosphate = N(6)-dimethylallyladenosine(37) in tRNA + diphosphate. Catalyzes the transfer of a dimethylallyl group onto the adenine at position 37 in tRNAs that read codons beginning with uridine, leading to the formation of N6-(dimethylallyl)adenosine (i(6)A). The sequence is that of tRNA dimethylallyltransferase from Staphylococcus aureus (strain bovine RF122 / ET3-1).